A 265-amino-acid polypeptide reads, in one-letter code: Lipopolysaccharide core heptose(I) kinase WaaP (265 aa).

The active site involves Asp-162.

This sequence belongs to the protein kinase superfamily. KdkA/RfaP family. Mg(2+) is required as a cofactor.

The protein localises to the cell inner membrane. It catalyses the reaction an L-alpha-D-Hep-(1-&gt;3)-L-alpha-D-Hep-(1-&gt;5)-[alpha-Kdo-(2-&gt;4)]-alpha-Kdo-(2-&gt;6)-lipid A + ATP = an L-alpha-D-Hep-(1-&gt;3)-4-O-phospho-L-alpha-D-Hep-(1-&gt;5)-[alpha-Kdo-(2-&gt;4)]-alpha-Kdo-(2-&gt;6)-lipid A + ADP + H(+). The catalysed reaction is L-alpha-D-Hep-(1-&gt;3)-L-alpha-D-Hep-(1-&gt;5)-[alpha-Kdo-(2-&gt;4)]-alpha-Kdo-(2-&gt;6)-lipid A (E. coli) + ATP = L-alpha-D-Hep-(1-&gt;3)-4-O-phospho-L-alpha-D-Hep-(1-&gt;5)-[alpha-Kdo-(2-&gt;4)]-alpha-Kdo-(2-&gt;6)-lipid A (E. coli) + ADP + H(+). It participates in bacterial outer membrane biogenesis; LPS core biosynthesis. Its function is as follows. Kinase involved in the biosynthesis of the core oligosaccharide region of lipopolysaccharide (LPS). Catalyzes the phosphorylation of heptose I (HepI), the first heptose added to the Kdo2-lipid A module. The sequence is that of Lipopolysaccharide core heptose(I) kinase WaaP from Escherichia coli.